A 108-amino-acid chain; its full sequence is MIPGEIITPDGEIELNAGRNTVKLSVANAGDRPIQVGSHFHFYEVNHGLIFDRELALGMRLDIPAGTAVRFEPGDEKEVTLVPLVGSREVYGFNGRVNGEINAEGRGG.

The protein belongs to the urease beta subunit family. As to quaternary structure, heterotrimer of UreA (gamma), UreB (beta) and UreC (alpha) subunits. Three heterotrimers associate to form the active enzyme.

It localises to the cytoplasm. It carries out the reaction urea + 2 H2O + H(+) = hydrogencarbonate + 2 NH4(+). Its pathway is nitrogen metabolism; urea degradation; CO(2) and NH(3) from urea (urease route): step 1/1. The protein is Urease subunit beta of Trichormus variabilis (strain ATCC 29413 / PCC 7937) (Anabaena variabilis).